The chain runs to 315 residues: Methionyl-tRNA formyltransferase (315 aa).

Serine 113 to proline 116 contacts (6S)-5,6,7,8-tetrahydrofolate.

The protein belongs to the Fmt family.

It carries out the reaction L-methionyl-tRNA(fMet) + (6R)-10-formyltetrahydrofolate = N-formyl-L-methionyl-tRNA(fMet) + (6S)-5,6,7,8-tetrahydrofolate + H(+). Attaches a formyl group to the free amino group of methionyl-tRNA(fMet). The formyl group appears to play a dual role in the initiator identity of N-formylmethionyl-tRNA by promoting its recognition by IF2 and preventing the misappropriation of this tRNA by the elongation apparatus. This Shigella boydii serotype 18 (strain CDC 3083-94 / BS512) protein is Methionyl-tRNA formyltransferase.